A 204-amino-acid chain; its full sequence is MRFPSVALDTLIDEFAKLPGIGRKTAQRLAMYILHEPKIEAEQLAKALLDVKEKVVRCTICQNITDVGTDPCAICASKARDRTVICVVESPVDMLAFEKTGHYKGLYHVLHGVISPLDGVGPDDIKVRELLARIPVGEASGVREVVLALNPTIEGETTSLYLARLLKPLGIAVTKIARGIPVGAELEYVDEATLSRAMEGRTVV.

The C4-type zinc-finger motif lies at 58–75; the sequence is CTICQNITDVGTDPCAIC. A Toprim domain is found at 83-181; sequence TVICVVESPV…AVTKIARGIP (99 aa).

The protein belongs to the RecR family.

May play a role in DNA repair. It seems to be involved in an RecBC-independent recombinational process of DNA repair. It may act with RecF and RecO. The sequence is that of Recombination protein RecR from Chlorobium chlorochromatii (strain CaD3).